Here is a 181-residue protein sequence, read N- to C-terminus: Acireductone dioxygenase (181 aa).

Fe(2+) is bound by residues His-91, His-93, Glu-97, and His-136. Ni(2+) is bound by residues His-91, His-93, Glu-97, and His-136.

Belongs to the acireductone dioxygenase (ARD) family. As to quaternary structure, monomer. Interacts with MMP14. Fe(2+) serves as cofactor. It depends on Ni(2+) as a cofactor.

Its subcellular location is the cytoplasm. It is found in the nucleus. It localises to the cell membrane. It catalyses the reaction 1,2-dihydroxy-5-(methylsulfanyl)pent-1-en-3-one + O2 = 4-methylsulfanyl-2-oxobutanoate + formate + 2 H(+). The catalysed reaction is 1,2-dihydroxy-5-(methylsulfanyl)pent-1-en-3-one + O2 = 3-(methylsulfanyl)propanoate + CO + formate + 2 H(+). It functions in the pathway amino-acid biosynthesis; L-methionine biosynthesis via salvage pathway; L-methionine from S-methyl-5-thio-alpha-D-ribose 1-phosphate: step 5/6. In terms of biological role, catalyzes 2 different reactions between oxygen and the acireductone 1,2-dihydroxy-3-keto-5-methylthiopentene (DHK-MTPene) depending upon the metal bound in the active site. Fe-containing acireductone dioxygenase (Fe-ARD) produces formate and 2-keto-4-methylthiobutyrate (KMTB), the alpha-ketoacid precursor of methionine in the methionine recycle pathway. Ni-containing acireductone dioxygenase (Ni-ARD) produces methylthiopropionate, carbon monoxide and formate, and does not lie on the methionine recycle pathway. This is Acireductone dioxygenase (adi1) from Danio rerio (Zebrafish).